The sequence spans 83 residues: RNA-binding protein Hfq (83 aa).

The region spanning 11–71 (DTFLNFVRKN…ISTIMPGQPI (61 aa)) is the Sm domain.

It belongs to the Hfq family. As to quaternary structure, homohexamer.

In terms of biological role, RNA chaperone that binds small regulatory RNA (sRNAs) and mRNAs to facilitate mRNA translational regulation in response to envelope stress, environmental stress and changes in metabolite concentrations. Also binds with high specificity to tRNAs. The chain is RNA-binding protein Hfq from Methylocella silvestris (strain DSM 15510 / CIP 108128 / LMG 27833 / NCIMB 13906 / BL2).